The chain runs to 250 residues: Pyrroloquinoline-quinone synthase (250 aa).

The protein belongs to the PqqC family.

It carries out the reaction 6-(2-amino-2-carboxyethyl)-7,8-dioxo-1,2,3,4,7,8-hexahydroquinoline-2,4-dicarboxylate + 3 O2 = pyrroloquinoline quinone + 2 H2O2 + 2 H2O + H(+). Its pathway is cofactor biosynthesis; pyrroloquinoline quinone biosynthesis. Its function is as follows. Ring cyclization and eight-electron oxidation of 3a-(2-amino-2-carboxyethyl)-4,5-dioxo-4,5,6,7,8,9-hexahydroquinoline-7,9-dicarboxylic-acid to PQQ. The protein is Pyrroloquinoline-quinone synthase of Xanthomonas oryzae pv. oryzae (strain MAFF 311018).